The sequence spans 186 residues: ATP synthase subunit delta (186 aa).

Belongs to the ATPase delta chain family. In terms of assembly, F-type ATPases have 2 components, F(1) - the catalytic core - and F(0) - the membrane proton channel. F(1) has five subunits: alpha(3), beta(3), gamma(1), delta(1), epsilon(1). CF(0) has four main subunits: a(1), b(1), b'(1) and c(10-14). The alpha and beta chains form an alternating ring which encloses part of the gamma chain. F(1) is attached to F(0) by a central stalk formed by the gamma and epsilon chains, while a peripheral stalk is formed by the delta, b and b' chains.

It localises to the cell inner membrane. Its function is as follows. F(1)F(0) ATP synthase produces ATP from ADP in the presence of a proton or sodium gradient. F-type ATPases consist of two structural domains, F(1) containing the extramembraneous catalytic core and F(0) containing the membrane proton channel, linked together by a central stalk and a peripheral stalk. During catalysis, ATP synthesis in the catalytic domain of F(1) is coupled via a rotary mechanism of the central stalk subunits to proton translocation. This protein is part of the stalk that links CF(0) to CF(1). It either transmits conformational changes from CF(0) to CF(1) or is implicated in proton conduction. This chain is ATP synthase subunit delta, found in Rhodospirillum centenum (strain ATCC 51521 / SW).